The sequence spans 382 residues: Galactokinase (382 aa).

34 to 37 (EHTD) serves as a coordination point for substrate. Residue 124-130 (GAGLSSS) coordinates ATP. The Mg(2+) site is built by Ser-130 and Glu-162. Asp-174 acts as the Proton acceptor in catalysis. Substrate is bound at residue Tyr-223.

The protein belongs to the GHMP kinase family. GalK subfamily.

The protein localises to the cytoplasm. The enzyme catalyses alpha-D-galactose + ATP = alpha-D-galactose 1-phosphate + ADP + H(+). It functions in the pathway carbohydrate metabolism; galactose metabolism. Functionally, catalyzes the transfer of the gamma-phosphate of ATP to D-galactose to form alpha-D-galactose-1-phosphate (Gal-1-P). In Shigella dysenteriae serotype 1 (strain Sd197), this protein is Galactokinase.